Consider the following 471-residue polypeptide: Ribulose bisphosphate carboxylase large chain 2 (471 aa).

Substrate is bound by residues Asn-116 and Thr-166. The active-site Proton acceptor is Lys-168. Lys-170 is a binding site for substrate. Positions 194, 196, and 197 each coordinate Mg(2+). Lys-194 carries the N6-carboxylysine modification. The Proton acceptor role is filled by His-287. Substrate is bound by residues Arg-288, His-320, and Ser-372.

Belongs to the RuBisCO large chain family. Type I subfamily. Heterohexadecamer of 8 large chains and 8 small chains. Mg(2+) is required as a cofactor.

It localises to the carboxysome. It catalyses the reaction 2 (2R)-3-phosphoglycerate + 2 H(+) = D-ribulose 1,5-bisphosphate + CO2 + H2O. It carries out the reaction D-ribulose 1,5-bisphosphate + O2 = 2-phosphoglycolate + (2R)-3-phosphoglycerate + 2 H(+). RuBisCO catalyzes two reactions: the carboxylation of D-ribulose 1,5-bisphosphate, the primary event in carbon dioxide fixation, as well as the oxidative fragmentation of the pentose substrate. Both reactions occur simultaneously and in competition at the same active site. The protein is Ribulose bisphosphate carboxylase large chain 2 of Hydrogenovibrio marinus.